We begin with the raw amino-acid sequence, 146 residues long: Hemoglobin subunit beta (146 aa).

Residue Val1 is modified to N-acetylvaline. The 145-residue stretch at 2–146 (HLTAAEKSAI…VANALAHKYH (145 aa)) folds into the Globin domain. His63 contributes to the heme b binding site. Lys82 carries the post-translational modification N6-acetyllysine. His92 serves as a coordination point for heme b. The residue at position 93 (Cys93) is an S-nitrosocysteine. At Lys144 the chain carries N6-acetyllysine.

It belongs to the globin family. Heterotetramer of two alpha chains and two beta chains. Red blood cells.

Its function is as follows. Involved in oxygen transport from the lung to the various peripheral tissues. The polypeptide is Hemoglobin subunit beta (HBB) (Cavia porcellus (Guinea pig)).